A 318-amino-acid polypeptide reads, in one-letter code: Serine protease 41 (318 aa).

The N-terminal stretch at 1-19 (MGARGALLLALLLARAGLG) is a signal peptide. The propeptide occupies 20-54 (KPGELGALQAGPGAARRPGGGGREEACGHREIHAL). The region spanning 55–297 (VAGGVESARG…YFHWIRRVMS (243 aa)) is the Peptidase S1 domain. A disulfide bridge links C80 with C96. Catalysis depends on charge relay system residues H95 and D147. 3 disulfides stabilise this stretch: C181–C255, C215–C234, and C245–C273. The N-linked (GlcNAc...) asparagine glycan is linked to N211. S249 acts as the Charge relay system in catalysis. A glycan (N-linked (GlcNAc...) asparagine) is linked at N284. A lipid anchor (GPI-anchor amidated serine) is attached at S299. Residues 300-318 (TPRPNPSQLLLLLALLWAP) constitute a propeptide, removed in mature form.

Belongs to the peptidase S1 family. Post-translationally, N-glycosylated.

Its subcellular location is the cell membrane. This Homo sapiens (Human) protein is Serine protease 41.